The chain runs to 578 residues: MPRGLELLIAQTILQGFDAQYGRFLEVTSGAQQRFEQADWHAVQQAMKNRIHLYDHHVGLVVEQLRCITNGQSTDAAFLLRVKEHYTRLLPDYPRFEIAESFFNSVYCRLFDHRSLTPERLFIFSSQPERRFRTIPRPLAKDFHPDHGWESLLMRVISDLPLRLRWQNKSRDIHYIIRHLTETLGTDNLAESHLQVANELFYRNKAAWLVGKLITPSGTLPFLLPIHQTDDGELFIDTCLTTTAEASIVFGFARSYFMVYAPLPAALVEWLREILPGKTTAELYMAIGCQKHAKTESYREYLVYLQGCNEQFIEAPGIRGMVMLVFTLPGFDRVFKVIKDKFAPQKEMSAAHVRACYQLVKEHDRVGRMADTQEFENFVLEKRHISPALMELLLQEAAEKITDLGEQIVIRHLYIERRMVPLNIWLEQVEGQQLRDAIEEYGNAIRQLAAANIFPGDMLFKNFGVTRHGRVVFYDYDEICYMTEVNFRDIPPPRYPEDELASEPWYSVSPGDVFPEEFRHWLCADPRIGPLFEEMHADLFRADYWRALQNRIREGHVEDVYAYRRRQRFSVRYGEMLF.

ATP is bound by residues 315–321 (APGIRGM) and Lys-336. Asp-371 is an active-site residue.

This sequence belongs to the AceK family.

It localises to the cytoplasm. The enzyme catalyses L-seryl-[isocitrate dehydrogenase] + ATP = O-phospho-L-seryl-[isocitrate dehydrogenase] + ADP + H(+). Functionally, bifunctional enzyme which can phosphorylate or dephosphorylate isocitrate dehydrogenase (IDH) on a specific serine residue. This is a regulatory mechanism which enables bacteria to bypass the Krebs cycle via the glyoxylate shunt in response to the source of carbon. When bacteria are grown on glucose, IDH is fully active and unphosphorylated, but when grown on acetate or ethanol, the activity of IDH declines drastically concomitant with its phosphorylation. The polypeptide is Isocitrate dehydrogenase kinase/phosphatase (Escherichia coli O139:H28 (strain E24377A / ETEC)).